Consider the following 390-residue polypeptide: Succinate--CoA ligase [ADP-forming] subunit beta (390 aa).

In terms of domain architecture, ATP-grasp spans 9–245 (KHLLKKYNIP…TTQEDEHETM (237 aa)). Residues Lys46, 53 to 55 (GRG), Glu99, Ser102, and Glu107 each bind ATP. Asn200 and Asp214 together coordinate Mg(2+). Substrate-binding positions include Asn265 and 322-324 (GIV).

It belongs to the succinate/malate CoA ligase beta subunit family. In terms of assembly, heterotetramer of two alpha and two beta subunits. Mg(2+) serves as cofactor.

It carries out the reaction succinate + ATP + CoA = succinyl-CoA + ADP + phosphate. It catalyses the reaction GTP + succinate + CoA = succinyl-CoA + GDP + phosphate. The protein operates within carbohydrate metabolism; tricarboxylic acid cycle; succinate from succinyl-CoA (ligase route): step 1/1. Functionally, succinyl-CoA synthetase functions in the citric acid cycle (TCA), coupling the hydrolysis of succinyl-CoA to the synthesis of either ATP or GTP and thus represents the only step of substrate-level phosphorylation in the TCA. The beta subunit provides nucleotide specificity of the enzyme and binds the substrate succinate, while the binding sites for coenzyme A and phosphate are found in the alpha subunit. The polypeptide is Succinate--CoA ligase [ADP-forming] subunit beta (Coxiella burnetii (strain RSA 493 / Nine Mile phase I)).